Here is a 210-residue protein sequence, read N- to C-terminus: RNA chaperone ProQ (210 aa).

The segment at 118 to 146 is disordered; the sequence is KAAKPEKKRPARRVAAKGQHAKETTTNKA. A compositionally biased stretch (basic residues) spans 123–132; the sequence is EKKRPARRVA.

Belongs to the ProQ family.

It localises to the cytoplasm. Functionally, RNA chaperone with significant RNA binding, RNA strand exchange and RNA duplexing activities. This is RNA chaperone ProQ from Pasteurella multocida (strain Pm70).